A 64-amino-acid polypeptide reads, in one-letter code: Small ribosomal subunit protein eS17 (64 aa).

It belongs to the eukaryotic ribosomal protein eS17 family.

The polypeptide is Small ribosomal subunit protein eS17 (Methanosarcina mazei (strain ATCC BAA-159 / DSM 3647 / Goe1 / Go1 / JCM 11833 / OCM 88) (Methanosarcina frisia)).